The following is a 78-amino-acid chain: Mitotic-spindle organizing protein 1 (78 aa).

The residue at position 2 (A2) is an N-acetylalanine.

It belongs to the MOZART1 family. In terms of assembly, associates with the gamma-tubulin ring complex (gTuRC) consisting of TUBGCP2, TUBGCP3, TUBGCP4, TUBGCP5 and TUBGCP6 and gamma-tubulin TUBG1 or TUBG2; within the complex, interacts with TUBGCP3 and TUBGCP6 to form a luminal bridge with actin that stabilizes the initial structure during complex assembly. Interacts with TUBG1.

It localises to the cytoplasm. The protein localises to the cytoskeleton. It is found in the microtubule organizing center. The protein resides in the centrosome. Its subcellular location is the spindle. Required for the recruitment and the assembly of the gamma-tubulin ring complex (gTuRC) at the centrosome. The gTuRC regulates the minus-end nucleation of alpha-beta tubulin heterodimers that grow into microtubule protafilaments, a critical step in centrosome duplication and spindle formation. In Mus musculus (Mouse), this protein is Mitotic-spindle organizing protein 1 (Mzt1).